The following is a 179-amino-acid chain: ATP synthase subunit delta (179 aa).

Belongs to the ATPase delta chain family. In terms of assembly, F-type ATPases have 2 components, F(1) - the catalytic core - and F(0) - the membrane proton channel. F(1) has five subunits: alpha(3), beta(3), gamma(1), delta(1), epsilon(1). F(0) has three main subunits: a(1), b(2) and c(10-14). The alpha and beta chains form an alternating ring which encloses part of the gamma chain. F(1) is attached to F(0) by a central stalk formed by the gamma and epsilon chains, while a peripheral stalk is formed by the delta and b chains.

The protein resides in the cell membrane. In terms of biological role, f(1)F(0) ATP synthase produces ATP from ADP in the presence of a proton or sodium gradient. F-type ATPases consist of two structural domains, F(1) containing the extramembraneous catalytic core and F(0) containing the membrane proton channel, linked together by a central stalk and a peripheral stalk. During catalysis, ATP synthesis in the catalytic domain of F(1) is coupled via a rotary mechanism of the central stalk subunits to proton translocation. Functionally, this protein is part of the stalk that links CF(0) to CF(1). It either transmits conformational changes from CF(0) to CF(1) or is implicated in proton conduction. This chain is ATP synthase subunit delta, found in Staphylococcus aureus (strain Mu50 / ATCC 700699).